The primary structure comprises 635 residues: DNA-directed RNA polymerase III subunit rpc3 (635 aa).

3 disordered regions span residues 131-164 (PEQSHTNGVDKEHDEVDGDEEQPNGLSGDHSDQQ), 246-295 (VPRG…GYDT), and 386-424 (SGSIGPMEISQPDNRRGKRPLEDDVNGTNHEGANGLSSG). Residues 272 to 292 (SVDEDDEQDEEENEWSDDEMG) show a composition bias toward acidic residues. Basic and acidic residues predominate over residues 398-407 (DNRRGKRPLE). Positions 411 to 424 (NGTNHEGANGLSSG) are enriched in polar residues. The tract at residues 562–583 (TYKAMSRCFQRLRFERNRLKEF) is leucine-zipper.

Belongs to the RNA polymerase beta chain family. In terms of assembly, component of the RNA polymerase III (Pol III) complex consisting of 17 subunits.

The protein localises to the nucleus. DNA-dependent RNA polymerase catalyzes the transcription of DNA into RNA using the four ribonucleoside triphosphates as substrates. Specific core component of RNA polymerase III which synthesizes small RNAs, such as 5S rRNA and tRNAs. This is DNA-directed RNA polymerase III subunit rpc3 (rpc82) from Aspergillus clavatus (strain ATCC 1007 / CBS 513.65 / DSM 816 / NCTC 3887 / NRRL 1 / QM 1276 / 107).